The primary structure comprises 753 residues: 5-methyltetrahydropteroyltriglutamate--homocysteine methyltransferase (753 aa).

Residues 17–20 (RELK) and K117 each bind 5-methyltetrahydropteroyltri-L-glutamate. L-homocysteine-binding positions include 431 to 433 (IGS) and E484. L-methionine contacts are provided by residues 431–433 (IGS) and E484. 5-methyltetrahydropteroyltri-L-glutamate is bound by residues 515 to 516 (RC) and W561. An L-homocysteine-binding site is contributed by D599. D599 contacts L-methionine. A 5-methyltetrahydropteroyltri-L-glutamate-binding site is contributed by E605. Zn(2+) is bound by residues H641, C643, and E665. The Proton donor role is filled by H694. A Zn(2+)-binding site is contributed by C726.

It belongs to the vitamin-B12 independent methionine synthase family. Requires Zn(2+) as cofactor.

It catalyses the reaction 5-methyltetrahydropteroyltri-L-glutamate + L-homocysteine = tetrahydropteroyltri-L-glutamate + L-methionine. It participates in amino-acid biosynthesis; L-methionine biosynthesis via de novo pathway; L-methionine from L-homocysteine (MetE route): step 1/1. Catalyzes the transfer of a methyl group from 5-methyltetrahydrofolate to homocysteine resulting in methionine formation. The protein is 5-methyltetrahydropteroyltriglutamate--homocysteine methyltransferase of Escherichia coli (strain ATCC 8739 / DSM 1576 / NBRC 3972 / NCIMB 8545 / WDCM 00012 / Crooks).